The chain runs to 1037 residues: Probable inorganic carbon transporter subunit DabA 1 (1037 aa).

Residues Cys-460, Asp-462, His-719, and Cys-734 each contribute to the Zn(2+) site.

It belongs to the inorganic carbon transporter (TC 9.A.2) DabA family. In terms of assembly, forms a complex with DabB. It depends on Zn(2+) as a cofactor.

The protein localises to the cell inner membrane. In terms of biological role, part of an energy-coupled inorganic carbon pump. This chain is Probable inorganic carbon transporter subunit DabA 1, found in Nitrobacter winogradskyi (strain ATCC 25391 / DSM 10237 / CIP 104748 / NCIMB 11846 / Nb-255).